The chain runs to 501 residues: Ribose import ATP-binding protein RbsA (501 aa).

2 ABC transporter domains span residues 6 to 242 and 253 to 495; these read LQLS…VGRK and VHGQ…VGKK. Residue 38 to 45 coordinates ATP; it reads GENGAGKS.

Belongs to the ABC transporter superfamily. Ribose importer (TC 3.A.1.2.1) family. The complex is composed of an ATP-binding protein (RbsA), two transmembrane proteins (RbsC) and a solute-binding protein (RbsB).

The protein resides in the cell inner membrane. The enzyme catalyses D-ribose(out) + ATP + H2O = D-ribose(in) + ADP + phosphate + H(+). Functionally, part of the ABC transporter complex RbsABC involved in ribose import. Responsible for energy coupling to the transport system. This chain is Ribose import ATP-binding protein RbsA, found in Vibrio vulnificus (strain YJ016).